We begin with the raw amino-acid sequence, 280 residues long: UPF0328 protein ECU06_0020/ECU06_1700 (280 aa).

It belongs to the UPF0328 family.

The sequence is that of UPF0328 protein ECU06_0020/ECU06_1700 from Encephalitozoon cuniculi (strain GB-M1) (Microsporidian parasite).